The primary structure comprises 105 residues: Late embryogenesis abundant protein Lea5-A (105 aa).

It belongs to the LEA type 3 family.

In Gossypium hirsutum (Upland cotton), this protein is Late embryogenesis abundant protein Lea5-A (LEA5-A).